Reading from the N-terminus, the 246-residue chain is tRNA pseudouridine synthase B (246 aa).

The active-site Nucleophile is aspartate 44.

The protein belongs to the pseudouridine synthase TruB family. Type 1 subfamily.

It catalyses the reaction uridine(55) in tRNA = pseudouridine(55) in tRNA. Responsible for synthesis of pseudouridine from uracil-55 in the psi GC loop of transfer RNAs. The protein is tRNA pseudouridine synthase B of Desulfotalea psychrophila (strain LSv54 / DSM 12343).